Reading from the N-terminus, the 78-residue chain is Large ribosomal subunit protein bL28 (78 aa).

Belongs to the bacterial ribosomal protein bL28 family.

The chain is Large ribosomal subunit protein bL28 from Francisella tularensis subsp. holarctica (strain FTNF002-00 / FTA).